We begin with the raw amino-acid sequence, 397 residues long: Acetate kinase (397 aa).

Asn-8 serves as a coordination point for Mg(2+). Lys-15 lines the ATP pocket. Arg-89 serves as a coordination point for substrate. The active-site Proton donor/acceptor is Asp-146. ATP-binding positions include 206 to 210 (HLGNG), 281 to 283 (DLR), and 329 to 333 (GIGEN). Glu-382 is a binding site for Mg(2+).

This sequence belongs to the acetokinase family. As to quaternary structure, homodimer. Requires Mg(2+) as cofactor. It depends on Mn(2+) as a cofactor.

It is found in the cytoplasm. The enzyme catalyses acetate + ATP = acetyl phosphate + ADP. The protein operates within metabolic intermediate biosynthesis; acetyl-CoA biosynthesis; acetyl-CoA from acetate: step 1/2. Functionally, catalyzes the formation of acetyl phosphate from acetate and ATP. Can also catalyze the reverse reaction. In Geobacillus sp. (strain WCH70), this protein is Acetate kinase.